Reading from the N-terminus, the 565-residue chain is NAD-dependent malic enzyme (565 aa).

Catalysis depends on Y104, which acts as the Proton donor. R157 provides a ligand contact to NAD(+). The active-site Proton acceptor is the K175. Residues E246, D247, and D270 each coordinate a divalent metal cation. NAD(+) contacts are provided by D270 and N418.

This sequence belongs to the malic enzymes family. Homotetramer. Requires Mg(2+) as cofactor. Mn(2+) is required as a cofactor.

The catalysed reaction is (S)-malate + NAD(+) = pyruvate + CO2 + NADH. It catalyses the reaction oxaloacetate + H(+) = pyruvate + CO2. The protein is NAD-dependent malic enzyme of Yersinia enterocolitica serotype O:8 / biotype 1B (strain NCTC 13174 / 8081).